We begin with the raw amino-acid sequence, 316 residues long: L-lactate dehydrogenase (316 aa).

NAD(+)-binding positions include 13–15 (GMI), 34–36 (FDI), Tyr67, and 79–83 (TAGFT). Arg95 is a substrate binding site. Residues 125–127 (VTN), Leu150, and Leu154 each bind NAD(+). The substrate site is built by Arg158 and His182. Position 182 (His182) interacts with NAD(+). His182 serves as the catalytic Proton acceptor.

Belongs to the LDH/MDH superfamily. LDH family. Homotetramer.

It catalyses the reaction (S)-lactate + NAD(+) = pyruvate + NADH + H(+). It participates in fermentation; pyruvate fermentation to lactate; (S)-lactate from pyruvate: step 1/1. In Plasmodium berghei, this protein is L-lactate dehydrogenase.